Here is a 234-residue protein sequence, read N- to C-terminus: Peroxiredoxin-2E, chloroplastic (234 aa).

The N-terminal 70 residues, 1-70 (MATSLSVSRF…TRSFATTPVT (70 aa)), are a transit peptide targeting the chloroplast. Residues 73–234 (ISVGDKLPDS…SSAEDMLKAL (162 aa)) form the Thioredoxin domain. Serine 82 carries the post-translational modification Phosphoserine. The Cysteine sulfenic acid (-SOH) intermediate role is filled by cysteine 121.

It belongs to the peroxiredoxin family. Prx5 subfamily. Monomer. Expressed in all tissues but predominantly in buds, siliques and seeds.

The protein resides in the plastid. It is found in the chloroplast stroma. It catalyses the reaction [glutaredoxin]-dithiol + a hydroperoxide = [glutaredoxin]-disulfide + an alcohol + H2O. In terms of biological role, thiol-specific peroxidase that catalyzes the reduction of hydrogen peroxide and organic hydroperoxides to water and alcohols, respectively. Plays a role in cell protection against oxidative stress by detoxifying peroxides. May be involved in chloroplast redox homeostasis. This is Peroxiredoxin-2E, chloroplastic (PRXIIE) from Arabidopsis thaliana (Mouse-ear cress).